Here is a 371-residue protein sequence, read N- to C-terminus: Putative glutamate--cysteine ligase 2 (371 aa).

Belongs to the glutamate--cysteine ligase type 2 family. YbdK subfamily.

It carries out the reaction L-cysteine + L-glutamate + ATP = gamma-L-glutamyl-L-cysteine + ADP + phosphate + H(+). In terms of biological role, ATP-dependent carboxylate-amine ligase which exhibits weak glutamate--cysteine ligase activity. The polypeptide is Putative glutamate--cysteine ligase 2 (Burkholderia lata (strain ATCC 17760 / DSM 23089 / LMG 22485 / NCIMB 9086 / R18194 / 383)).